Consider the following 225-residue polypeptide: Uridylate kinase (225 aa).

Residue 9–10 participates in ATP binding; that stretch reads GS. Position 46 (Gly46) interacts with UMP. ATP is bound by residues Gly47 and Arg51. UMP contacts are provided by residues Asp67 and 115 to 121; that span reads THPAHTT. 4 residues coordinate ATP: Thr141, Asn142, Tyr147, and Asp150.

This sequence belongs to the UMP kinase family. In terms of assembly, homohexamer.

Its subcellular location is the cytoplasm. The catalysed reaction is UMP + ATP = UDP + ADP. It participates in pyrimidine metabolism; CTP biosynthesis via de novo pathway; UDP from UMP (UMPK route): step 1/1. With respect to regulation, inhibited by UTP. Functionally, catalyzes the reversible phosphorylation of UMP to UDP. The chain is Uridylate kinase from Methanococcus maripaludis (strain DSM 14266 / JCM 13030 / NBRC 101832 / S2 / LL).